Here is an 833-residue protein sequence, read N- to C-terminus: DNA polymerase I, thermostable (833 aa).

A 5'-3' exonuclease domain is found at 173 to 267 (VPPERWVDFR…FKALRRRTPD (95 aa)). Positions 412-833 (ERLFQNLFPR…GRDWLEAKQD (422 aa)) are polymerase.

Belongs to the DNA polymerase type-A family.

It catalyses the reaction DNA(n) + a 2'-deoxyribonucleoside 5'-triphosphate = DNA(n+1) + diphosphate. Functionally, in addition to polymerase activity, this DNA polymerase exhibits 5'-3' exonuclease activity. Unlikely to have 3'-5' exonuclease activity due to absence of a 3'-5' exonuclease domain. The protein is DNA polymerase I, thermostable (polA) of Thermus filiformis.